Here is a 473-residue protein sequence, read N- to C-terminus: ATP synthase subunit beta (473 aa).

Residue 158-165 participates in ATP binding; that stretch reads GGAGVGKT.

This sequence belongs to the ATPase alpha/beta chains family. F-type ATPases have 2 components, CF(1) - the catalytic core - and CF(0) - the membrane proton channel. CF(1) has five subunits: alpha(3), beta(3), gamma(1), delta(1), epsilon(1). CF(0) has three main subunits: a(1), b(2) and c(9-12). The alpha and beta chains form an alternating ring which encloses part of the gamma chain. CF(1) is attached to CF(0) by a central stalk formed by the gamma and epsilon chains, while a peripheral stalk is formed by the delta and b chains. The F(1)F(0) complex interacts with SpoIIIJ and YqjG; YqgA is found in the same complex.

Its subcellular location is the cell membrane. It localises to the membrane raft. It catalyses the reaction ATP + H2O + 4 H(+)(in) = ADP + phosphate + 5 H(+)(out). In terms of biological role, produces ATP from ADP in the presence of a proton gradient across the membrane. The catalytic sites are hosted primarily by the beta subunits. This Bacillus subtilis (strain 168) protein is ATP synthase subunit beta.